Consider the following 162-residue polypeptide: Allophycocyanin beta chain (162 aa).

Asn-72 carries the post-translational modification N4-methylasparagine. Cys-82 provides a ligand contact to (2R,3E)-phycocyanobilin.

The protein belongs to the phycobiliprotein family. As to quaternary structure, heterodimer of an alpha and a beta chain. Contains one covalently linked phycocyanobilin chromophore.

It is found in the cellular thylakoid membrane. Light-harvesting photosynthetic bile pigment-protein from the phycobiliprotein complex. Allophycocyanin has a maximum absorption at approximately 650 nanometers. The protein is Allophycocyanin beta chain of Microchaete diplosiphon (Fremyella diplosiphon).